The primary structure comprises 553 residues: Coiled-coil domain-containing protein 22 homolog (553 aa).

The tract at residues 236–264 (DSEEPAPPPISTVKPDASAEEEASPIQEL) is disordered. 3 coiled-coil regions span residues 261 to 286 (IQELSDQVEELRVQCETLLAERKAHA), 314 to 407 (ERTS…QSLA), and 498 to 549 (NVTK…VEQP).

It belongs to the CCDC22 family.

In Drosophila erecta (Fruit fly), this protein is Coiled-coil domain-containing protein 22 homolog.